The following is a 354-amino-acid chain: MGSGISSESKESAKRSKELEKKLQEDAERDARTVKLLLLGAGESGKSTIVKQMKIIHKNGYSEQECMEFKAVIYSNTLQSILAIVKAMTTLGIDYVNPRSAEDQRQLYAMANTLEDGGMTPQLAEVIKRLWRDPGIQACFERASEYQLNDSAAYYLNDLDRITASGYVPNEQDVLHSRVKTTGIIETQFSFKDLHFRMFDVGGQRSERKKWIHCFEGVTCIIFCAALSAYDMVLVEDEEVNRMHESLHLFNSICNHKYFSTTSIVLFLNKKDIFQEKVTKVHLSICFPEYTGPNTFEDAGNYIKNQFLDLNLKKEDKEIYSHMTCATDTQNVKFVFDAVTDIIIKENLKDCGLF.

Positions 1–27 (MGSGISSESKESAKRSKELEKKLQEDA) are disordered. Gly-2 is lipidated: N-myristoyl glycine. Residues 8-27 (ESKESAKRSKELEKKLQEDA) show a composition bias toward basic and acidic residues. One can recognise a G-alpha domain in the interval 32-354 (RTVKLLLLGA…KENLKDCGLF (323 aa)). Positions 35–48 (KLLLLGAGESGKST) are G1 motif. Residues 40–47 (GAGESGKS), 175–181 (LHSRVKT), 200–204 (DVGGQ), 269–272 (NKKD), and Ala-326 each bind GTP. Residues Ser-47 and Thr-181 each contribute to the Mg(2+) site. The tract at residues 173 to 181 (DVLHSRVKT) is G2 motif. The tract at residues 196 to 205 (FRMFDVGGQR) is G3 motif. The tract at residues 265–272 (VLFLNKKD) is G4 motif. The interval 324 to 329 (TCATDT) is G5 motif.

It belongs to the G-alpha family. G(i/o/t/z) subfamily. In terms of assembly, g proteins are composed of 3 units; alpha, beta and gamma, respectively GNAT3, GNB1 and GNG13 for Gustducin heterotrimer for bitter taste transduction. The alpha chain contains the guanine nucleotide binding site. Component of the TAS2R14-GNAT3 complex, consisting of TAS2R14, GNAT3, GNB1 and GNG2; within the complex interacts with TAS2R14; this complex plays a role in the perception of bitterness. Gustducin heterotrimer may also be composed of GNAT3, GNB3 and GNG13. Post-translationally, potential N-myristoylation may anchor alpha-subunit to the inner surface of plasma membrane. As to expression, expressed in taste buds (sensory organs of clustered epithelial cells) of the circumvallate and foliate papillae of the tongue at protein level. Expressed in enteroendocrine L cells of the gut. Detected also in spermatozoa.

The protein resides in the cytoplasm. In terms of biological role, guanine nucleotide-binding protein (G protein) alpha subunit playing a prominent role in bitter and sweet taste transduction as well as in umami (monosodium glutamate, monopotassium glutamate, and inosine monophosphate) taste transduction. Transduction by this alpha subunit involves coupling of specific cell-surface receptors with a cGMP-phosphodiesterase; Activation of phosphodiesterase lowers intracellular levels of cAMP and cGMP which may open a cyclic nucleotide-suppressible cation channel leading to influx of calcium, ultimately leading to release of neurotransmitter. Indeed, denatonium and strychnine induce transient reduction in cAMP and cGMP in taste tissue, whereas this decrease is inhibited by GNAT3 antibody. Gustducin heterotrimer transduces response to bitter and sweet compounds via regulation of phosphodiesterase for alpha subunit, as well as via activation of phospholipase C for beta and gamma subunits, with ultimate increase inositol trisphosphate and increase of intracellular Calcium. GNAT3 can functionally couple to taste receptors to transmit intracellular signal: receptor heterodimer TAS1R2/TAS1R3 senses sweetness and TAS1R1/TAS1R3 transduces umami taste, whereas the T2R family GPCRs such as TAS2R14 act as bitter sensors. Also functions as lumenal sugar sensors in the gut to control the expression of the Na+-glucose transporter SGLT1 in response to dietaty sugar, as well as the secretion of Glucagon-like peptide-1, GLP-1 and glucose-dependent insulinotropic polypeptide, GIP. Thus, may modulate the gut capacity to absorb sugars, with implications in malabsorption syndromes and diet-related disorders including diabetes and obesity. This is Guanine nucleotide-binding protein G(t) subunit alpha-3 (GNAT3) from Homo sapiens (Human).